The following is a 65-amino-acid chain: Alpha-conotoxine-like Am1.5 (65 aa).

A signal peptide spans 1 to 21 (MGMRMMFTVFLLVVLATTVVS). A propeptide spanning residues 22-46 (FMSGRAFRDRNAAAKVSDLIALKAR) is cleaved from the precursor. A 4-carboxyglutamate modification is found at glutamate 49. The tract at residues 52–54 (SHP) is ser-Xaa-Pro motif, crucial for potent interaction with nAChR. Proline 54 and proline 61 each carry 4-hydroxyproline. Glutamate 62 is subject to 4-carboxyglutamate.

The protein belongs to the conotoxin A superfamily. In terms of processing, contains 2 disulfide bonds. Expressed by the venom duct.

Its subcellular location is the secreted. Alpha-conotoxins act on postsynaptic membranes, they bind to the nicotinic acetylcholine receptors (nAChR) and thus inhibit them. The chain is Alpha-conotoxine-like Am1.5 from Conus amadis (Amadis cone).